A 528-amino-acid chain; its full sequence is (R)-citramalate synthase (528 aa).

The Pyruvate carboxyltransferase domain occupies 5-271 (VYIYDTTLRD…IPQENLKKLT (267 aa)).

Belongs to the alpha-IPM synthase/homocitrate synthase family.

It carries out the reaction pyruvate + acetyl-CoA + H2O = (3R)-citramalate + CoA + H(+). It functions in the pathway amino-acid biosynthesis; L-isoleucine biosynthesis; 2-oxobutanoate from pyruvate: step 1/3. Its function is as follows. Catalyzes the condensation of pyruvate and acetyl-coenzyme A to form (R)-citramalate. The polypeptide is (R)-citramalate synthase (Aquifex aeolicus (strain VF5)).